Consider the following 699-residue polypeptide: Auxin response factor 10 (699 aa).

3 disordered regions span residues 108 to 136 (AAEA…DANN), 505 to 533 (TDLT…DDTK), and 551 to 595 (KNGN…SWSL). Residues 110 to 119 (EARREEENSR) show a composition bias toward basic and acidic residues. The span at 125–135 (FAKTLTQSDAN) shows a compositional bias: polar residues. A DNA-binding region (TF-B3) is located at residues 125-227 (FAKTLTQSDA…NIHVGLRRAK (103 aa)). Residues 570–593 (PNTSEGSDSGVTQGSPTKNTTPSW) are compositionally biased toward polar residues. Residues 613–693 (PGQCKVFVES…RKLRILTDAG (81 aa)) form the PB1 domain.

It belongs to the ARF family. In terms of assembly, homodimers and heterodimers.

The protein localises to the nucleus. In terms of biological role, auxin response factors (ARFs) are transcriptional factors that bind specifically to the DNA sequence 5'-TGTCTC-3' found in the auxin-responsive promoter elements (AuxREs). The sequence is that of Auxin response factor 10 (ARF10) from Oryza sativa subsp. indica (Rice).